Here is a 611-residue protein sequence, read N- to C-terminus: Aspartate--tRNA ligase, mitochondrial (611 aa).

The transit peptide at 1–30 (MVLSRLPACLLPLVGTKVSIQGWLVATSRQ) directs the protein to the mitochondrion. Glutamate 192 contacts L-aspartate. The aspartate stretch occupies residues 216 to 219 (QQYK). Residue arginine 238 participates in L-aspartate binding. ATP-binding positions include 238 to 240 (RDE) and glutamate 502. Residue arginine 509 participates in L-aspartate binding. 554–557 (GFDR) lines the ATP pocket.

This sequence belongs to the class-II aminoacyl-tRNA synthetase family. Type 1 subfamily.

Its subcellular location is the mitochondrion. It carries out the reaction tRNA(Asp) + L-aspartate + ATP = L-aspartyl-tRNA(Asp) + AMP + diphosphate. This is Aspartate--tRNA ligase, mitochondrial (msd1) from Schizosaccharomyces pombe (strain 972 / ATCC 24843) (Fission yeast).